A 55-amino-acid polypeptide reads, in one-letter code: UPF0391 membrane protein RSp1666 (55 aa).

Helical transmembrane passes span 5–25 (AVIF…GIAA) and 33–53 (ILFM…LVAG).

Belongs to the UPF0391 family.

It is found in the cell membrane. The sequence is that of UPF0391 membrane protein RSp1666 from Ralstonia nicotianae (strain ATCC BAA-1114 / GMI1000) (Ralstonia solanacearum).